The chain runs to 536 residues: Probable cytochrome P450 520A1 (536 aa).

A helical membrane pass occupies residues 1–21; that stretch reads MEILTFIIYLITFFILFDFYK. Residue cysteine 479 participates in heme binding.

Belongs to the cytochrome P450 family. It depends on heme as a cofactor.

The protein localises to the membrane. The polypeptide is Probable cytochrome P450 520A1 (cyp520A1) (Dictyostelium discoideum (Social amoeba)).